Consider the following 100-residue polypeptide: Transcription elongation factor A protein-like 7 (100 aa).

Positions 1–32 (MQKPCKENEGKPKCSVPKREEKRPYGEFERQQ) are enriched in basic and acidic residues. The segment at 1–34 (MQKPCKENEGKPKCSVPKREEKRPYGEFERQQTE) is disordered. Residues 60 to 88 (EEMTREGDEMERCLEEIRGLRKKFRALHS) adopt a coiled-coil conformation.

Belongs to the TFS-II family. TFA subfamily. As to expression, highly expressed in normal and fetal brain tissues, and weakly expressed in uterus and ovary. Down-regulated in epithelial ovarian, cervical, prostate, breast, brain and lung cancer cell lines and in brain and ovarian tumors.

The protein resides in the nucleus. In terms of biological role, plays a role in the negative regulation of NF-kappa-B signaling at the basal level by modulating transcriptional activity of NF-kappa-B on its target gene promoters. Associates with cyclin D1 promoter containing Myc E-box sequence and transcriptionally represses cyclin D1 expression. Regulates telomerase reverse transcriptase expression and telomerase activity in both ALT (alternative lengthening of telomeres)and telomerase-positive cell lines. This is Transcription elongation factor A protein-like 7 (TCEAL7) from Homo sapiens (Human).